The sequence spans 399 residues: Succinate--CoA ligase [ADP-forming] subunit beta (399 aa).

An ATP-grasp domain is found at 9 to 254 (KAVLAEFGAP…ESEEDPKEIE (246 aa)). Residues Lys-46, 53-55 (GRG), Glu-109, Ala-112, and Glu-117 contribute to the ATP site. Residues Asn-209 and Asp-223 each contribute to the Mg(2+) site. Substrate is bound by residues Asn-274 and 331–333 (GIM).

The protein belongs to the succinate/malate CoA ligase beta subunit family. Heterotetramer of two alpha and two beta subunits. Mg(2+) is required as a cofactor.

It catalyses the reaction succinate + ATP + CoA = succinyl-CoA + ADP + phosphate. The enzyme catalyses GTP + succinate + CoA = succinyl-CoA + GDP + phosphate. It functions in the pathway carbohydrate metabolism; tricarboxylic acid cycle; succinate from succinyl-CoA (ligase route): step 1/1. In terms of biological role, succinyl-CoA synthetase functions in the citric acid cycle (TCA), coupling the hydrolysis of succinyl-CoA to the synthesis of either ATP or GTP and thus represents the only step of substrate-level phosphorylation in the TCA. The beta subunit provides nucleotide specificity of the enzyme and binds the substrate succinate, while the binding sites for coenzyme A and phosphate are found in the alpha subunit. This Caulobacter vibrioides (strain NA1000 / CB15N) (Caulobacter crescentus) protein is Succinate--CoA ligase [ADP-forming] subunit beta.